Consider the following 367-residue polypeptide: Peptide chain release factor 1 (367 aa).

An N5-methylglutamine modification is found at Q238.

This sequence belongs to the prokaryotic/mitochondrial release factor family. Post-translationally, methylated by PrmC. Methylation increases the termination efficiency of RF1.

The protein localises to the cytoplasm. Peptide chain release factor 1 directs the termination of translation in response to the peptide chain termination codons UAG and UAA. The chain is Peptide chain release factor 1 from Dictyoglomus turgidum (strain DSM 6724 / Z-1310).